The primary structure comprises 311 residues: Putative HTH-type transcriptional regulatory protein PTO0557 (311 aa).

The region spanning 132-186 (MRRIRELKGYSVGYLSSKLGISRRSISLYESGSSATIDIYLKLEETLGEDLTKDI) is the HTH cro/C1-type domain. The H-T-H motif DNA-binding region spans 143 to 162 (VGYLSSKLGISRRSISLYES).

This is Putative HTH-type transcriptional regulatory protein PTO0557 from Picrophilus torridus (strain ATCC 700027 / DSM 9790 / JCM 10055 / NBRC 100828 / KAW 2/3).